Consider the following 649-residue polypeptide: Probable cyclic nucleotide-gated ion channel 12 (649 aa).

At 1-43 (MNHRRSKFARIDSMGVDGKLKSVRGRLKKVYGKMKTLENWRKT) the chain is on the cytoplasmic side. A helical membrane pass occupies residues 44-64 (VLLACVVALAIDPLFLFIPLI). The Extracellular segment spans residues 65 to 76 (DSQRFCFTFDKT). The chain crosses the membrane as a helical span at residues 77–97 (LVAVVCVIRTFIDTFYVIHII). The Cytoplasmic segment spans residues 98 to 128 (YYLITETIAPRSQASLRGEIVVHSKATLKTR). A helical membrane pass occupies residues 129-149 (LLFHFIVDIISVLPIPQVVVL). The Extracellular segment spans residues 150-162 (TLIPLSASLVSER). A helical membrane pass occupies residues 163–183 (ILKWIILSQYVPRIIRMYPLY). Topologically, residues 184 to 200 (KEVTRAFGTVAESKWAG) are cytoplasmic. Residues 201–221 (AALNLFLYMLHSYVFGAFWYL) traverse the membrane as a helical segment. Over 222 to 329 (SSIERKSKCW…QNLETSNSAG (108 aa)) the chain is Extracellular. A helical membrane pass occupies residues 330–350 (EIFFAIIICVSGLLLFAVLIG). At 351–649 (NVQKYLQSST…ADLEFAKAEA (299 aa)) the chain is on the cytoplasmic side. A nucleoside 3',5'-cyclic phosphate is bound by residues 436–559 (LNIM…TFRL) and glutamate 507. The interval 545–560 (LNVFQRQKLQRTFRLY) is calmodulin-binding. In terms of domain architecture, IQ spans 565–594 (RSWAAFFIQAAWRKHCKRKLSKTRDNENIP). Positions 618 to 649 (RRKDTADCSSSPDMSPPVPHKPADLEFAKAEA) are disordered. The segment covering 638 to 649 (KPADLEFAKAEA) has biased composition (basic and acidic residues).

Belongs to the cyclic nucleotide-gated cation channel (TC 1.A.1.5) family. Homotetramer or heterotetramer.

Its subcellular location is the cell membrane. Probable cyclic nucleotide-gated ion channel. This is Probable cyclic nucleotide-gated ion channel 12 (CNGC12) from Arabidopsis thaliana (Mouse-ear cress).